A 285-amino-acid chain; its full sequence is MTTNDSWFTEHFQATGSAIGFRITGKLDEVQSPFQKIEIYNSTDWGKLMVIDGALMLTSRDNFLYHEMISHPALFTHTAPKCVVIIGGGDCGTLREVLKHPDIEQVTQCDIDEQVTRMAEKHFPELCTSNNDPRATLLFSDGVAYMTDCPTNSVDVIIVDSTDPVGPAKGLFNRTFYESCFRALKNDGLLVQQSESPLALLELIKEMRHEMSKAGFKAFKTLPFPQPCYPTGWWSVTLSSKQPNANFAFRQTDAQTKPFDTLYYNAHLHHGVLVPPPFIAHALGE.

A PABS domain is found at 5–241 (DSWFTEHFQA…GWWSVTLSSK (237 aa)). Position 35 (Gln-35) interacts with S-methyl-5'-thioadenosine. Spermidine contacts are provided by His-66 and Asp-90. S-methyl-5'-thioadenosine-binding positions include Asp-110 and 141-142 (DG). The active-site Proton acceptor is the Asp-160. 160-163 (DSTD) provides a ligand contact to spermidine. Pro-167 serves as a coordination point for S-methyl-5'-thioadenosine.

Belongs to the spermidine/spermine synthase family. As to quaternary structure, homodimer or homotetramer.

It is found in the cytoplasm. It carries out the reaction S-adenosyl 3-(methylsulfanyl)propylamine + putrescine = S-methyl-5'-thioadenosine + spermidine + H(+). Its pathway is amine and polyamine biosynthesis; spermidine biosynthesis; spermidine from putrescine: step 1/1. Functionally, catalyzes the irreversible transfer of a propylamine group from the amino donor S-adenosylmethioninamine (decarboxy-AdoMet) to putrescine (1,4-diaminobutane) to yield spermidine. In Xylella fastidiosa (strain 9a5c), this protein is Polyamine aminopropyltransferase.